Consider the following 458-residue polypeptide: Monomethylamine methyltransferase MtmB3 (458 aa).

Residue Pyl-202 is a non-standard amino acid, pyrrolysine.

This sequence belongs to the monomethylamine methyltransferase family.

The catalysed reaction is Co(I)-[methylamine-specific corrinoid protein] + methylamine + H(+) = methyl-Co(III)-[methylamine-specific corrinoid protein] + NH4(+). Its pathway is one-carbon metabolism; methanogenesis from methylamine. In terms of biological role, catalyzes the transfer of the methyl group from monomethylamine to the corrinoid cofactor of MtmC. The protein is Monomethylamine methyltransferase MtmB3 (mtmB3) of Methanosarcina barkeri (strain Fusaro / DSM 804).